The chain runs to 120 residues: PYEKIGAELVKEVAKKTDDVAGDGTTTATVLAQALVKEGLRNVAAGANPLSLKRGIEKAVEKVTETLLKSAKEVETKDQIAATAAISAGDQSIGDLIAEAMDKVGNEGVITVEESNTFGL.

23–27 (DGTTT) provides a ligand contact to ATP.

Belongs to the chaperonin (HSP60) family. In terms of assembly, forms a cylinder of 14 subunits composed of two heptameric rings stacked back-to-back. Interacts with the co-chaperonin GroES.

It is found in the cytoplasm. The catalysed reaction is ATP + H2O + a folded polypeptide = ADP + phosphate + an unfolded polypeptide.. Functionally, together with its co-chaperonin GroES, plays an essential role in assisting protein folding. The GroEL-GroES system forms a nano-cage that allows encapsulation of the non-native substrate proteins and provides a physical environment optimized to promote and accelerate protein folding. The chain is Chaperonin GroEL from Mycobacterium scrofulaceum.